Reading from the N-terminus, the 539-residue chain is Cytochrome c oxidase subunit 1 homolog, bacteroid (539 aa).

3 helical membrane passes run 4–24 (TVEM…AGLA), 28–48 (LFGA…LVLM), and 75–95 (GVVA…VVAL). H117 contributes to the heme b binding site. Helical transmembrane passes span 118–138 (TSAV…FYVV), 154–174 (FVFW…LLGI), 187–207 (VDLW…GTIM), 214–234 (IYVA…LHVV), 265–285 (GHNA…YYFI), 298–318 (LSII…PHHL), 330–350 (LGMV…INGL), and 368–388 (MMVM…MMSI). Positions 266, 316, and 317 each coordinate Cu cation. Residues H404 and H406 each contribute to the heme b site. A run of 4 helical transmembrane segments spans residues 405–425 (VHSG…YYLV), 443–463 (HFWL…VAGI), 475–495 (QGFL…YYVM), and 499–519 (GGAL…MTIL).

Belongs to the heme-copper respiratory oxidase family. The cofactor is Cu(2+). It depends on heme b as a cofactor.

It localises to the cell membrane. It catalyses the reaction 4 Fe(II)-[cytochrome c] + O2 + 8 H(+)(in) = 4 Fe(III)-[cytochrome c] + 2 H2O + 4 H(+)(out). It functions in the pathway energy metabolism; oxidative phosphorylation. Functionally, cytochrome c oxidase is the component of the respiratory chain that catalyzes the reduction of oxygen to water. Subunits 1-3 form the functional core of the enzyme complex. Co I is the catalytic subunit of the enzyme. Electrons originating in cytochrome c or a quinol are transferred to the bimetallic center formed by a high-spin heme and copper B. This chain is Cytochrome c oxidase subunit 1 homolog, bacteroid (fixN), found in Rhizobium meliloti (strain 1021) (Ensifer meliloti).